The chain runs to 227 residues: Cytochrome c oxidase subunit 2 (227 aa).

Residues 1–14 (MAYPFQLGLQDATS) are Mitochondrial intermembrane-facing. The helical transmembrane segment at 15 to 45 (PIMEELTNFHDHTLMIVFLISSLVLYIISSM) threads the bilayer. The Mitochondrial matrix segment spans residues 46–59 (LATKMTHTSTMDAQ). The helical transmembrane segment at 60–87 (SMETIWTILPAVILVLIALPSLRILYMM) threads the bilayer. Topologically, residues 88–227 (DEINNPVLTV…FFENWSASMI (140 aa)) are mitochondrial intermembrane. The Cu cation site is built by His161, Cys196, Glu198, Cys200, His204, and Met207. Glu198 is a binding site for Mg(2+).

The protein belongs to the cytochrome c oxidase subunit 2 family. As to quaternary structure, component of the cytochrome c oxidase (complex IV, CIV), a multisubunit enzyme composed of 14 subunits. The complex is composed of a catalytic core of 3 subunits MT-CO1, MT-CO2 and MT-CO3, encoded in the mitochondrial DNA, and 11 supernumerary subunits COX4I, COX5A, COX5B, COX6A, COX6B, COX6C, COX7A, COX7B, COX7C, COX8 and NDUFA4, which are encoded in the nuclear genome. The complex exists as a monomer or a dimer and forms supercomplexes (SCs) in the inner mitochondrial membrane with NADH-ubiquinone oxidoreductase (complex I, CI) and ubiquinol-cytochrome c oxidoreductase (cytochrome b-c1 complex, complex III, CIII), resulting in different assemblies (supercomplex SCI(1)III(2)IV(1) and megacomplex MCI(2)III(2)IV(2)). Found in a complex with TMEM177, COA6, COX18, COX20, SCO1 and SCO2. Interacts with TMEM177 in a COX20-dependent manner. Interacts with COX20. Interacts with COX16. Cu cation serves as cofactor.

It is found in the mitochondrion inner membrane. The enzyme catalyses 4 Fe(II)-[cytochrome c] + O2 + 8 H(+)(in) = 4 Fe(III)-[cytochrome c] + 2 H2O + 4 H(+)(out). Its function is as follows. Component of the cytochrome c oxidase, the last enzyme in the mitochondrial electron transport chain which drives oxidative phosphorylation. The respiratory chain contains 3 multisubunit complexes succinate dehydrogenase (complex II, CII), ubiquinol-cytochrome c oxidoreductase (cytochrome b-c1 complex, complex III, CIII) and cytochrome c oxidase (complex IV, CIV), that cooperate to transfer electrons derived from NADH and succinate to molecular oxygen, creating an electrochemical gradient over the inner membrane that drives transmembrane transport and the ATP synthase. Cytochrome c oxidase is the component of the respiratory chain that catalyzes the reduction of oxygen to water. Electrons originating from reduced cytochrome c in the intermembrane space (IMS) are transferred via the dinuclear copper A center (CU(A)) of subunit 2 and heme A of subunit 1 to the active site in subunit 1, a binuclear center (BNC) formed by heme A3 and copper B (CU(B)). The BNC reduces molecular oxygen to 2 water molecules using 4 electrons from cytochrome c in the IMS and 4 protons from the mitochondrial matrix. The chain is Cytochrome c oxidase subunit 2 (MT-CO2) from Acomys wilsoni (Wilson's spiny mouse).